The chain runs to 210 residues: High mobility group protein B2 (210 aa).

K3 is subject to N6-acetyllysine. Residues 9–79 (PRGKMSSYAF…RYDREMKNYV (71 aa)) constitute a DNA-binding region (HMG box 1). C23 is modified (cysteine sulfonic acid (-SO3H); alternate). Cysteines 23 and 45 form a disulfide. At K30 the chain carries N6-acetyllysine. S35 bears the Phosphoserine mark. K43 carries the N6-acetyllysine modification. C45 carries the cysteine sulfonic acid (-SO3H); alternate modification. The span at 51–76 (TMSAKEKSKFEDLAKSDKARYDREMK) shows a compositional bias: basic and acidic residues. Positions 51–102 (TMSAKEKSKFEDLAKSDKARYDREMKNYVPPKGDKKGKKKDPNAPKRPPSAF) are disordered. Position 90 is an N6-acetyllysine (K90). A DNA-binding region (HMG box 2) is located at residues 95–163 (PKRPPSAFFL…KYEKDIAAYR (69 aa)). S100 is subject to Phosphoserine. A Cysteine sulfonic acid (-SO3H) modification is found at C106. Residues K114 and K141 each carry the N6-acetyllysine modification. Positions 162–172 (YRAKGKSEVGK) are enriched in basic and acidic residues. The segment at 162 to 210 (YRAKGKSEVGKKGPGRPTGSKKKNEPEDEEEEEEEEDDEDEEEEDEDEE) is disordered. A required for chemotactic activity region spans residues 165-180 (KGKSEVGKKGPGRPTG). The span at 187-210 (PEDEEEEEEEEDDEDEEEEDEDEE) shows a compositional bias: acidic residues.

The protein belongs to the HMGB family. Interacts with POU2F2, POU2F1 and POU3F1. Component of the RAG complex composed of core components RAG1 and RAG2, and associated component HMGB1 or HMGB2. Component of the SET complex, composed of at least ANP32A, APEX1, HMGB2, NME1, SET and TREX1. Directly interacts with SET. Interacts with LEF1. In terms of processing, reduction/oxidation of cysteine residues Cys-23, Cys-45 and Cys-106 and a possible intramolecular disulfide bond involving Cys-23 and Cys-45 give rise to different redox forms with specific functional activities in various cellular compartments: 1- fully reduced HMGB2 (HMGB2C23hC45hC106h), 2- disulfide HMGB2 (HMGB2C23-C45C106h) and 3- sulfonyl HMGB2 (HMGB2C23soC45soC106so).

The protein resides in the nucleus. The protein localises to the chromosome. Its subcellular location is the cytoplasm. It localises to the secreted. Functionally, multifunctional protein with various roles in different cellular compartments. May act in a redox sensitive manner. In the nucleus is an abundant chromatin-associated non-histone protein involved in transcription, chromatin remodeling and V(D)J recombination and probably other processes. Binds DNA with a preference to non-canonical DNA structures such as single-stranded DNA. Can bent DNA and enhance DNA flexibility by looping thus providing a mechanism to promote activities on various gene promoters by enhancing transcription factor binding and/or bringing distant regulatory sequences into close proximity. Involved in V(D)J recombination by acting as a cofactor of the RAG complex: acts by stimulating cleavage and RAG protein binding at the 23 bp spacer of conserved recombination signal sequences (RSS). Proposed to be involved in the innate immune response to nucleic acids by acting as a cytoplasmic promiscuous immunogenic DNA/RNA sensor which cooperates with subsequent discriminative sensing by specific pattern recognition receptors. In the extracellular compartment acts as a chemokine. Promotes proliferation and migration of endothelial cells implicating AGER/RAGE. Has antimicrobial activity in gastrointestinal epithelial tissues. Involved in inflammatory response to antigenic stimulus coupled with pro-inflammatory activity. May play a role in germ cell differentiation. Involved in modulation of neurogenesis probably by regulation of neural stem proliferation. Involved in articular cartilage surface maintenance implicating LEF1 and the Wnt/beta-catenin pathway. This is High mobility group protein B2 (Hmgb2) from Rattus norvegicus (Rat).